The sequence spans 98 residues: Co-chaperonin GroES (98 aa).

This sequence belongs to the GroES chaperonin family. As to quaternary structure, heptamer of 7 subunits arranged in a ring. Interacts with the chaperonin GroEL.

The protein resides in the cytoplasm. Functionally, together with the chaperonin GroEL, plays an essential role in assisting protein folding. The GroEL-GroES system forms a nano-cage that allows encapsulation of the non-native substrate proteins and provides a physical environment optimized to promote and accelerate protein folding. GroES binds to the apical surface of the GroEL ring, thereby capping the opening of the GroEL channel. The sequence is that of Co-chaperonin GroES from Bartonella quintana (strain Toulouse) (Rochalimaea quintana).